The following is a 355-amino-acid chain: Phytoene synthase (355 aa).

This sequence belongs to the phytoene/squalene synthase family. The cofactor is ATP. It depends on Mn(2+) as a cofactor. Mg(2+) serves as cofactor.

It functions in the pathway carotenoid biosynthesis; phytoene biosynthesis. In terms of biological role, involved in the biosynthesis of carotenoids. Catalyzes the condensation of two molecules of geranylgeranyl diphosphate (GGPP) to give prephytoene diphosphate (PPPP) and the subsequent rearrangement of the cyclopropylcarbinyl intermediate to yield phytoene. The protein is Phytoene synthase (crtB) of Cereibacter sphaeroides (strain ATCC 17023 / DSM 158 / JCM 6121 / CCUG 31486 / LMG 2827 / NBRC 12203 / NCIMB 8253 / ATH 2.4.1.) (Rhodobacter sphaeroides).